The following is a 101-amino-acid chain: Large ribosomal subunit protein eL43 (101 aa).

The segment at 40–62 (CPSCRSLVRLQRIAFGIWKCPKC) adopts a C4-type zinc-finger fold.

It belongs to the eukaryotic ribosomal protein eL43 family. It depends on Zn(2+) as a cofactor.

In Pyrobaculum neutrophilum (strain DSM 2338 / JCM 9278 / NBRC 100436 / V24Sta) (Thermoproteus neutrophilus), this protein is Large ribosomal subunit protein eL43.